A 176-amino-acid chain; its full sequence is Japanin (176 aa).

The N-terminal stretch at 1–24 is a signal peptide; sequence MKVLRCLVCSFYIIVSLITTMTIG. Glu-47 serves as a coordination point for cholesterol. 2 disulfides stabilise this stretch: Cys-52–Cys-174 and Cys-138–Cys-162. 2 N-linked (GlcNAc...) asparagine glycosylation sites follow: Asn-59 and Asn-155.

The protein belongs to the calycin superfamily. Lipocalin family. Homodimer; non-disulfide-linked. Each monomer accommodates one molecule of cholesterol in a pocket. In terms of tissue distribution, expressed in salivary glands.

The protein resides in the secreted. Functionally, salivary tick protein that modulates host immune response. This protein blocks dendritic cell (DC) differentiation from monocytes. In addition, it inhibits up-regulation of costimulatory molecules and pro-inflammatory cytokines in response to stimuli and promotes up-regulation of co-inhibitory molecules and the anti-inflammatory cytokine interleukin-10. It has a pocket to accomodate cholesterol, which may have immune-modulatory roles, either directly or through interactions with the host gut microbiota. This is Japanin from Rhipicephalus appendiculatus (Brown ear tick).